The sequence spans 207 residues: Segregation and condensation protein B (207 aa).

Residues 173–207 form a disordered region; the sequence is DDTAESDNDSADLYYRQFEQTLNETGPETAPKGEQ.

This sequence belongs to the ScpB family. As to quaternary structure, homodimer. Homodimerization may be required to stabilize the binding of ScpA to the Smc head domains. Component of a cohesin-like complex composed of ScpA, ScpB and the Smc homodimer, in which ScpA and ScpB bind to the head domain of Smc. The presence of the three proteins is required for the association of the complex with DNA.

Its subcellular location is the cytoplasm. In terms of biological role, participates in chromosomal partition during cell division. May act via the formation of a condensin-like complex containing Smc and ScpA that pull DNA away from mid-cell into both cell halves. The chain is Segregation and condensation protein B from Latilactobacillus sakei subsp. sakei (strain 23K) (Lactobacillus sakei subsp. sakei).